Reading from the N-terminus, the 378-residue chain is Putative glutamate--cysteine ligase 2-1 (378 aa).

Belongs to the glutamate--cysteine ligase type 2 family. YbdK subfamily.

The catalysed reaction is L-cysteine + L-glutamate + ATP = gamma-L-glutamyl-L-cysteine + ADP + phosphate + H(+). In terms of biological role, ATP-dependent carboxylate-amine ligase which exhibits weak glutamate--cysteine ligase activity. In Corynebacterium efficiens (strain DSM 44549 / YS-314 / AJ 12310 / JCM 11189 / NBRC 100395), this protein is Putative glutamate--cysteine ligase 2-1.